The following is a 194-amino-acid chain: Der GTPase-activating protein YihI (194 aa).

The disordered stretch occupies residues 1 to 81 (MSRSKKTRRI…AKVKKDPRVG (81 aa)). Composition is skewed to basic and acidic residues over residues 9 to 23 (RISD…DKKP) and 36 to 47 (TRYELDVQAREE). Positions 59 to 70 (GSRNVITEQKTA) are enriched in polar residues.

The protein belongs to the YihI family. As to quaternary structure, interacts with Der.

Its function is as follows. A GTPase-activating protein (GAP) that modifies Der/EngA GTPase function. May play a role in ribosome biogenesis. The sequence is that of Der GTPase-activating protein YihI from Haemophilus ducreyi (strain 35000HP / ATCC 700724).